Here is a 147-residue protein sequence, read N- to C-terminus: Ribosome-binding factor A (147 aa).

Residues 126-147 (LKKNAQPAGDAHPYKDDDAMND) form a disordered region. Residues 137–147 (HPYKDDDAMND) are compositionally biased toward basic and acidic residues.

It belongs to the RbfA family. Monomer. Binds 30S ribosomal subunits, but not 50S ribosomal subunits or 70S ribosomes.

The protein resides in the cytoplasm. One of several proteins that assist in the late maturation steps of the functional core of the 30S ribosomal subunit. Associates with free 30S ribosomal subunits (but not with 30S subunits that are part of 70S ribosomes or polysomes). Required for efficient processing of 16S rRNA. May interact with the 5'-terminal helix region of 16S rRNA. The chain is Ribosome-binding factor A from Corynebacterium diphtheriae (strain ATCC 700971 / NCTC 13129 / Biotype gravis).